The primary structure comprises 171 residues: Tetratricopeptide repeat protein 9C (171 aa).

3 TPR repeats span residues 8–41, 72–107, and 108–141; these read AQVY…LRGL, THCY…QPDN, and AKAL…QPKD.

Belongs to the TTC9 family.

This chain is Tetratricopeptide repeat protein 9C (Ttc9c), found in Mus musculus (Mouse).